Consider the following 439-residue polypeptide: Proton pump-interactor 4 (439 aa).

The stretch at 286–354 forms a coiled coil; the sequence is KEEKEIDEET…AKKKKAVCKS (69 aa). Residues 415-435 traverse the membrane as a helical segment; it reads LWVWTVSSAAVALPLALLVVF.

Belongs to the plant Proton pump-interactor protein family.

The protein localises to the cell membrane. It is found in the endoplasmic reticulum membrane. In terms of biological role, may regulate plasma membrane ATPase activity. This Arabidopsis thaliana (Mouse-ear cress) protein is Proton pump-interactor 4 (PPI4).